The chain runs to 194 residues: Fe/S biogenesis protein NfuA (194 aa).

Residues Cys152 and Cys155 each contribute to the [4Fe-4S] cluster site.

It belongs to the NfuA family. Homodimer. It depends on [4Fe-4S] cluster as a cofactor.

Functionally, involved in iron-sulfur cluster biogenesis. Binds a 4Fe-4S cluster, can transfer this cluster to apoproteins, and thereby intervenes in the maturation of Fe/S proteins. Could also act as a scaffold/chaperone for damaged Fe/S proteins. The chain is Fe/S biogenesis protein NfuA from Pseudomonas putida (strain ATCC 700007 / DSM 6899 / JCM 31910 / BCRC 17059 / LMG 24140 / F1).